The chain runs to 128 residues: Global transcriptional regulator Spx 1 (128 aa).

C10 and C13 are oxidised to a cystine.

It belongs to the ArsC family. Spx subfamily. As to quaternary structure, interacts with the C-terminal domain of the alpha subunit of the RNAP.

The protein resides in the cytoplasm. Functionally, global transcriptional regulator that plays a key role in stress response and exerts either positive or negative regulation of genes. Acts by interacting with the C-terminal domain of the alpha subunit of the RNA polymerase (RNAP). This interaction can enhance binding of RNAP to the promoter region of target genes and stimulate their transcription, or block interaction of RNAP with activator. The protein is Global transcriptional regulator Spx 1 of Lactococcus lactis subsp. lactis (strain IL1403) (Streptococcus lactis).